The chain runs to 468 residues: Midnolin (468 aa).

One can recognise a Ubiquitin-like domain in the interval 31-105 (MSLAIHSTTG…LTLVPTVEAG (75 aa)). 2 disordered regions span residues 182-264 (PSIA…RSRK) and 404-447 (LRRK…LGLD). Positions 185–201 (ASPVSSPCRPVSSAARV) are enriched in low complexity. Positions 202–213 (PPVPTSPSPASP) are enriched in pro residues. Low complexity-rich tracts occupy residues 237 to 260 (SPTA…SPAP) and 419 to 431 (SPSR…DSSS).

Interacts with GCK; the interaction occurs preferentially at low glucose levels. Interacts with the proteasome.

The protein resides in the nucleus. It is found in the nucleolus. The protein localises to the cytoplasm. Its subcellular location is the cytosol. Functionally, facilitates the ubiquitin-independent proteasomal degradation of stimulus-induced transcription factors such as FOSB, EGR1, NR4A1, and IRF4 to the proteasome for degradation. Promotes also the degradation of other substrates such as CBX4. Plays a role in inhibiting the activity of glucokinase GCK and both glucose-induced and basal insulin secretion. In Homo sapiens (Human), this protein is Midnolin (MIDN).